A 295-amino-acid chain; its full sequence is Sulfotransferase 1A1 (295 aa).

Position 48-53 (48-53 (KSGTTW)) interacts with 3'-phosphoadenylyl sulfate. 106–108 (KTH) serves as a coordination point for substrate. The Proton acceptor role is filled by histidine 108. 3'-phosphoadenylyl sulfate contacts are provided by residues arginine 130, serine 138, tyrosine 193, 227–232 (TSFKEM), and 255–259 (FMRKG). Serine 138 is modified (phosphoserine).

Belongs to the sulfotransferase 1 family. As to quaternary structure, homodimer.

The protein resides in the cytoplasm. The enzyme catalyses a phenol + 3'-phosphoadenylyl sulfate = an aryl sulfate + adenosine 3',5'-bisphosphate + H(+). The catalysed reaction is 17beta-estradiol + 3'-phosphoadenylyl sulfate = 17beta-estradiol 3-sulfate + adenosine 3',5'-bisphosphate + H(+). It carries out the reaction 4-ethylphenol + 3'-phosphoadenylyl sulfate = 4-ethylphenyl sulfate + adenosine 3',5'-bisphosphate + H(+). It catalyses the reaction 4-nitrophenol + 3'-phosphoadenylyl sulfate = 4-nitrophenyl sulfate + adenosine 3',5'-bisphosphate. The enzyme catalyses dopamine + 3'-phosphoadenylyl sulfate = dopamine 3-O-sulfate + adenosine 3',5'-bisphosphate + H(+). The catalysed reaction is dopamine + 3'-phosphoadenylyl sulfate = dopamine 4-O-sulfate + adenosine 3',5'-bisphosphate + H(+). It carries out the reaction 3,3',5-triiodo-L-thyronine + 3'-phosphoadenylyl sulfate = 3,3',5-triiodo-L-thyronine sulfate + adenosine 3',5'-bisphosphate + H(+). It catalyses the reaction 3,3',5'-triiodo-L-thyronine + 3'-phosphoadenylyl sulfate = 3,3',5'-triiodo-L-thyronine sulfate + adenosine 3',5'-bisphosphate + H(+). The enzyme catalyses 3,3'-diiodo-L-thyronine + 3'-phosphoadenylyl sulfate = 3,3'-diiodo-L-thyronine sulfate + adenosine 3',5'-bisphosphate + H(+). The catalysed reaction is L-thyroxine + 3'-phosphoadenylyl sulfate = L-thyroxine sulfate + adenosine 3',5'-bisphosphate + H(+). Functionally, sulfotransferase that utilizes 3'-phospho-5'-adenylyl sulfate (PAPS) as sulfonate donor to catalyze the sulfate conjugation of a wide variety of acceptor molecules bearing a hydroxyl or an amine group. Sulfonation increases the water solubility of most compounds, and therefore their renal excretion, but it can also result in bioactivation to form active metabolites. Displays broad substrate specificity for small phenolic compounds. Plays an important role in the sulfonation of endogenous molecules such as steroid hormones. Mediates also the metabolic activation of carcinogenic N-hydroxyarylamines leading to highly reactive intermediates capable of forming DNA adducts, potentially resulting in mutagenesis. May play a role in gut microbiota-host metabolic interaction. O-sulfonates 4-ethylphenol (4-EP), a dietary tyrosine-derived metabolite produced by gut bacteria. The product 4-EPS crosses the blood-brain barrier and may negatively regulate oligodendrocyte maturation and myelination, affecting the functional connectivity of different brain regions associated with the limbic system. Catalyzes the sulfate conjugation of dopamine. Catalyzes the sulfation of T4 (L-thyroxine/3,5,3',5'-tetraiodothyronine), T3 (3,5,3'-triiodothyronine), rT3 (3,3',5'-triiodothyronine) and 3,3'-T2 (3,3'-diiodothyronine), with a substrate preference of 3,3'-T2 &gt; rT3 &gt; T3 &gt; T4. The protein is Sulfotransferase 1A1 (SULT1A1) of Macaca fascicularis (Crab-eating macaque).